Reading from the N-terminus, the 122-residue chain is Large ribosomal subunit protein uL14c (122 aa).

The protein belongs to the universal ribosomal protein uL14 family. In terms of assembly, part of the 50S ribosomal subunit.

The protein resides in the plastid. It is found in the chloroplast. In terms of biological role, binds to 23S rRNA. This Lepidium virginicum (Virginia pepperweed) protein is Large ribosomal subunit protein uL14c.